The sequence spans 685 residues: MHGITDGTYRLVSEYDPKGDQPKAIMALTDGVLRGDRWQTLLGVTGSGKTFTVSNVIAQVDKPVLVMSHNKTLAAQLYGELRQFFPDNAVEYFVSYYDFYQPEAYLPALDKYIAKDLRINDEIERLRLKTTSSLLSGRRDVIVVSSVSCIYGLGSPDDWKAQIVELRSGMEKDRDLFLQELVSLHYIRDDVDPGPGKFRVRGDIIDLVPAHEELALRVEFFGSEIESLQTFNIQSGELLGKDTYAFIYPARQFIAEAETLKQAMVAIENELAGRLNELRRDDRLVEARRLEERTRYDLEMMKELGYCSGIENYSRHLAGRSEGERPYCLLDYFPEDFLVIVDESHVTLPQIRGMYGGDRSRKAILVEHGFRLPSALDNRPLRFEEFTEIVPQVICVSATPGDLELERCGGVVVEQLVRPTGLLDPPVEVRPVKGQIDDLLAEIRRHTAKGHKALVMTLTKRMSEDLDDYFKKVGIRSRYLHSEIKSLERIQILRELRAGDVEVLVGVNLLREGLDLPEVSLVAILDADKEGFLRNTRSLMQIAGRAARNVDGFVVFYADVLTRSIMEVLDETARRRTVQQLYNETHGITPRSIRKSLDQVLNTTSVADAEERYRRKRFGLGAKSGVQSAALLHSFTPEESYAMVAELRLEMNEAAIQMEYEKAAYLRDEIARLMHGLEAQSDSKE.

The 159-residue stretch at 30-188 (DGVLRGDRWQ…QELVSLHYIR (159 aa)) folds into the Helicase ATP-binding domain. Residue 43–50 (GVTGSGKT) participates in ATP binding. A Beta-hairpin motif is present at residues 96–119 (YYDFYQPEAYLPALDKYIAKDLRI). The 163-residue stretch at 435-597 (QIDDLLAEIR…ITPRSIRKSL (163 aa)) folds into the Helicase C-terminal domain. One can recognise a UVR domain in the interval 641–676 (YAMVAELRLEMNEAAIQMEYEKAAYLRDEIARLMHG).

It belongs to the UvrB family. Forms a heterotetramer with UvrA during the search for lesions. Interacts with UvrC in an incision complex.

It localises to the cytoplasm. Its function is as follows. The UvrABC repair system catalyzes the recognition and processing of DNA lesions. A damage recognition complex composed of 2 UvrA and 2 UvrB subunits scans DNA for abnormalities. Upon binding of the UvrA(2)B(2) complex to a putative damaged site, the DNA wraps around one UvrB monomer. DNA wrap is dependent on ATP binding by UvrB and probably causes local melting of the DNA helix, facilitating insertion of UvrB beta-hairpin between the DNA strands. Then UvrB probes one DNA strand for the presence of a lesion. If a lesion is found the UvrA subunits dissociate and the UvrB-DNA preincision complex is formed. This complex is subsequently bound by UvrC and the second UvrB is released. If no lesion is found, the DNA wraps around the other UvrB subunit that will check the other stand for damage. The polypeptide is UvrABC system protein B (Chlorobium phaeobacteroides (strain DSM 266 / SMG 266 / 2430)).